Here is a 236-residue protein sequence, read N- to C-terminus: Biosynthetic peptidoglycan transglycosylase (236 aa).

Residues 12 to 31 form a helical membrane-spanning segment; the sequence is ALLWFVAGSIVLVLVFRWVP.

It belongs to the glycosyltransferase 51 family.

It localises to the cell inner membrane. The enzyme catalyses [GlcNAc-(1-&gt;4)-Mur2Ac(oyl-L-Ala-gamma-D-Glu-L-Lys-D-Ala-D-Ala)](n)-di-trans,octa-cis-undecaprenyl diphosphate + beta-D-GlcNAc-(1-&gt;4)-Mur2Ac(oyl-L-Ala-gamma-D-Glu-L-Lys-D-Ala-D-Ala)-di-trans,octa-cis-undecaprenyl diphosphate = [GlcNAc-(1-&gt;4)-Mur2Ac(oyl-L-Ala-gamma-D-Glu-L-Lys-D-Ala-D-Ala)](n+1)-di-trans,octa-cis-undecaprenyl diphosphate + di-trans,octa-cis-undecaprenyl diphosphate + H(+). Its pathway is cell wall biogenesis; peptidoglycan biosynthesis. Peptidoglycan polymerase that catalyzes glycan chain elongation from lipid-linked precursors. This Pseudomonas putida (strain ATCC 47054 / DSM 6125 / CFBP 8728 / NCIMB 11950 / KT2440) protein is Biosynthetic peptidoglycan transglycosylase.